We begin with the raw amino-acid sequence, 203 residues long: Outer-membrane lipoprotein LolB (203 aa).

The N-terminal stretch at 1-18 (MTLRSFLILLLSSIVLAG) is a signal peptide. Cysteine 19 carries N-palmitoyl cysteine lipidation. The S-diacylglycerol cysteine moiety is linked to residue cysteine 19.

It belongs to the LolB family. Monomer.

The protein localises to the cell outer membrane. Plays a critical role in the incorporation of lipoproteins in the outer membrane after they are released by the LolA protein. The chain is Outer-membrane lipoprotein LolB from Vibrio campbellii (strain ATCC BAA-1116).